Here is a 426-residue protein sequence, read N- to C-terminus: tRNA(Ile)-lysidine synthase (426 aa).

Position 19 to 24 (19 to 24 (SGGLDS)) interacts with ATP.

This sequence belongs to the tRNA(Ile)-lysidine synthase family.

It is found in the cytoplasm. It carries out the reaction cytidine(34) in tRNA(Ile2) + L-lysine + ATP = lysidine(34) in tRNA(Ile2) + AMP + diphosphate + H(+). Its function is as follows. Ligates lysine onto the cytidine present at position 34 of the AUA codon-specific tRNA(Ile) that contains the anticodon CAU, in an ATP-dependent manner. Cytidine is converted to lysidine, thus changing the amino acid specificity of the tRNA from methionine to isoleucine. The protein is tRNA(Ile)-lysidine synthase of Neisseria meningitidis serogroup A / serotype 4A (strain DSM 15465 / Z2491).